The sequence spans 146 residues: Leptin (146 aa).

Cysteine 96 and cysteine 146 are disulfide-bonded.

Belongs to the leptin family.

The protein resides in the secreted. Key player in the regulation of energy balance and body weight control. Once released into the circulation, has central and peripheral effects by binding LEPR, found in many tissues, which results in the activation of several major signaling pathways. In the hypothalamus, acts as an appetite-regulating factor that induces a decrease in food intake and an increase in energy consumption by inducing anorexinogenic factors and suppressing orexigenic neuropeptides, also regulates bone mass and secretion of hypothalamo-pituitary-adrenal hormones. In the periphery, increases basal metabolism, influences reproductive function, regulates pancreatic beta-cell function and insulin secretion, is pro-angiogenic for endothelial cell and affects innate and adaptive immunity. In the arcuate nucleus of the hypothalamus, activates by depolarization POMC neurons inducing FOS and SOCS3 expression to release anorexigenic peptides and inhibits by hyperpolarization NPY neurons inducing SOCS3 with a consequent reduction on release of orexigenic peptides. In addition to its known satiety inducing effect, has a modulatory role in nutrient absorption. In the intestine, reduces glucose absorption by enterocytes by activating PKC and leading to a sequential activation of p38, PI3K and ERK signaling pathways which exerts an inhibitory effect on glucose absorption. Acts as a growth factor on certain tissues, through the activation of different signaling pathways increases expression of genes involved in cell cycle regulation such as CCND1, via JAK2-STAT3 pathway, or VEGFA, via MAPK1/3 and PI3K-AKT1 pathways. May also play an apoptotic role via JAK2-STAT3 pathway and up-regulation of BIRC5 expression. Pro-angiogenic, has mitogenic activity on vascular endothelial cells and plays a role in matrix remodeling by regulating the expression of matrix metalloproteinases (MMPs) and tissue inhibitors of metalloproteinases (TIMPs). In innate immunity, modulates the activity and function of neutrophils by increasing chemotaxis and the secretion of oxygen radicals. Increases phagocytosis by macrophages and enhances secretion of pro-inflammatory mediators. Increases cytotoxic ability of NK cells. Plays a pro-inflammatory role, in synergy with IL1B, by inducing NOS2 which promotes the production of IL6, IL8 and Prostaglandin E2, through a signaling pathway that involves JAK2, PI3K, MAP2K1/MEK1 and MAPK14/p38. In adaptive immunity, promotes the switch of memory T-cells towards T helper-1 cell immune responses. Increases CD4(+)CD25(-) T-cell proliferation and reduces autophagy during TCR (T-cell receptor) stimulation, through MTOR signaling pathway activation and BCL2 up-regulation. The protein is Leptin (LEP) of Ovis aries (Sheep).